A 666-amino-acid chain; its full sequence is ATP-dependent zinc metalloprotease FtsH (666 aa).

The segment at 1–23 (MSREVTSGLPQDKPTGSAPPPPP) is disordered. Over 1-27 (MSREVTSGLPQDKPTGSAPPPPPPWRR) the chain is Cytoplasmic. The chain crosses the membrane as a helical span at residues 28–48 (WLLPIGLLVSLVLLFTFPMRP). Topologically, residues 49–125 (SSGKTLTYSE…RPPGPSLASQ (77 aa)) are extracellular. The helical transmembrane segment at 126–146 (VLAGVLSFLPFLLLLGLFAYS) threads the bilayer. Residues 147–666 (GRRAGAGFLA…RTAASSDDLL (520 aa)) are Cytoplasmic-facing. 219–226 (GPPGTGKT) provides a ligand contact to ATP. His-442 lines the Zn(2+) pocket. Glu-443 is an active-site residue. Zn(2+) contacts are provided by His-446 and Asp-518. The disordered stretch occupies residues 626–666 (PEEHREAAARHVRRPGIAAATGASMAGGSEPRTAASSDDLL). Positions 641–653 (GIAAATGASMAGG) are enriched in low complexity.

It in the central section; belongs to the AAA ATPase family. This sequence in the C-terminal section; belongs to the peptidase M41 family. In terms of assembly, homohexamer. Zn(2+) serves as cofactor.

Its subcellular location is the cell membrane. In terms of biological role, acts as a processive, ATP-dependent zinc metallopeptidase for both cytoplasmic and membrane proteins. Plays a role in the quality control of integral membrane proteins. The protein is ATP-dependent zinc metalloprotease FtsH of Acidothermus cellulolyticus (strain ATCC 43068 / DSM 8971 / 11B).